The primary structure comprises 814 residues: Cellulase/esterase CelE (814 aa).

Residues 1-34 (MKKIVSLVCVLVMLVSILGSFSVVAASPVKGFQV) form the signal peptide. The cellulase stretch occupies residues 35 to 354 (SGTKLLDASG…AVFWWDNGYY (320 aa)). Glu193 (proton donor; for cellulase activity) is an active-site residue. Catalysis depends on Glu316, which acts as the Nucleophile; for cellulase activity. The 71-residue stretch at 409-479 (ANILYGDVNG…LLRSIDKFPA (71 aa)) folds into the Dockerin domain. Residues Asp415, Asn417, Asp419, Gly420, Lys421, Asp426, Asp451, Val452, Asn453, Asp455, Lys457, and Asp462 each contribute to the Ca(2+) site. An esterase region spans residues 490-814 (PGILYNGRFD…TAEIKNKLGW (325 aa)). Ser612 acts as the Nucleophile; for esterase activity in catalysis.

This sequence in the N-terminal section; belongs to the glycosyl hydrolase 5 (cellulase A) family. The protein in the C-terminal section; belongs to the carbohydrate esterase 2 (CE2) family.

It is found in the secreted. It carries out the reaction Endohydrolysis of (1-&gt;4)-beta-D-glucosidic linkages in cellulose, lichenin and cereal beta-D-glucans.. The catalysed reaction is Deacetylation of xylans and xylo-oligosaccharides.. The protein operates within glycan metabolism; cellulose degradation. It functions in the pathway glycan degradation; xylan degradation. Esterase activity of the CE2 module is inhibited when this domain binds to cellohexaose or beta-glucan. Its function is as follows. Multifunctional enzyme involved in the degradation of plant cell wall polysaccharides. Displays endoglucanase activity against carboxymethyl cellulose (CMC) and barley beta-glucan. Also catalyzes the deacetylation of acetylated birchwood xylan and glucomannan, with a preference for the latter, and of the synthetic substrate 4-nitrophenyl acetate (4-NPAc). This Acetivibrio thermocellus (strain ATCC 27405 / DSM 1237 / JCM 9322 / NBRC 103400 / NCIMB 10682 / NRRL B-4536 / VPI 7372) (Clostridium thermocellum) protein is Cellulase/esterase CelE.